We begin with the raw amino-acid sequence, 510 residues long: UDP-N-acetylmuramoylalanine--D-glutamate ligase (510 aa).

138-144 (GTNGKTT) provides a ligand contact to ATP. A disordered region spans residues 294–316 (FDEPAPAPRRKKDAPPPTRAGGR).

This sequence belongs to the MurCDEF family.

Its subcellular location is the cytoplasm. The enzyme catalyses UDP-N-acetyl-alpha-D-muramoyl-L-alanine + D-glutamate + ATP = UDP-N-acetyl-alpha-D-muramoyl-L-alanyl-D-glutamate + ADP + phosphate + H(+). It functions in the pathway cell wall biogenesis; peptidoglycan biosynthesis. Functionally, cell wall formation. Catalyzes the addition of glutamate to the nucleotide precursor UDP-N-acetylmuramoyl-L-alanine (UMA). The protein is UDP-N-acetylmuramoylalanine--D-glutamate ligase of Bordetella bronchiseptica (strain ATCC BAA-588 / NCTC 13252 / RB50) (Alcaligenes bronchisepticus).